A 360-amino-acid chain; its full sequence is Phosphoserine aminotransferase (360 aa).

Arg-41 provides a ligand contact to L-glutamate. Pyridoxal 5'-phosphate-binding residues include Trp-101, Thr-152, Asp-172, and Gln-195. The residue at position 196 (Lys-196) is an N6-(pyridoxal phosphate)lysine. 237-238 (NT) lines the pyridoxal 5'-phosphate pocket.

Belongs to the class-V pyridoxal-phosphate-dependent aminotransferase family. SerC subfamily. Homodimer. Requires pyridoxal 5'-phosphate as cofactor.

It is found in the cytoplasm. It catalyses the reaction O-phospho-L-serine + 2-oxoglutarate = 3-phosphooxypyruvate + L-glutamate. The enzyme catalyses 4-(phosphooxy)-L-threonine + 2-oxoglutarate = (R)-3-hydroxy-2-oxo-4-phosphooxybutanoate + L-glutamate. Its pathway is amino-acid biosynthesis; L-serine biosynthesis; L-serine from 3-phospho-D-glycerate: step 2/3. It functions in the pathway cofactor biosynthesis; pyridoxine 5'-phosphate biosynthesis; pyridoxine 5'-phosphate from D-erythrose 4-phosphate: step 3/5. In terms of biological role, catalyzes the reversible conversion of 3-phosphohydroxypyruvate to phosphoserine and of 3-hydroxy-2-oxo-4-phosphonooxybutanoate to phosphohydroxythreonine. The protein is Phosphoserine aminotransferase of Paraburkholderia phymatum (strain DSM 17167 / CIP 108236 / LMG 21445 / STM815) (Burkholderia phymatum).